Consider the following 1198-residue polypeptide: Tetratricopeptide repeat protein 17 (1198 aa).

A TPR 1 repeat occupies 313-346; it reads LTSHYTLGNIYAMLGEYNHSVLCYEQALQAQPGF. Residues 358 to 399 are a coiled coil; that stretch reads CQQKLEQRLEAQHRSLQRTLNELKEYQKQHDHYLRQQEMLDK. 2 TPR repeats span residues 630–663 and 700–733; these read WMMQ…APPQ and PHTL…SVHC. Disordered stretches follow at residues 771 to 792 and 814 to 839; these read DSEL…VWDS and NGSG…EEQD. A compositionally biased stretch (basic and acidic residues) spans 821-832; that stretch reads GQDRTREPKAEG. TPR repeat units follow at residues 1071–1105, 1108–1141, and 1142–1175; these read SWVL…APHH, DVPL…APHF, and VVNH…QPEF.

Belongs to the TTC17 family.

It localises to the cytoplasm. It is found in the cell membrane. Its subcellular location is the cytoskeleton. Plays a role in primary ciliogenesis by modulating actin polymerization. The protein is Tetratricopeptide repeat protein 17 (ttc17) of Danio rerio (Zebrafish).